Here is a 118-residue protein sequence, read N- to C-terminus: Hydrogenase maturation factor HypA (118 aa).

A Ni(2+)-binding site is contributed by H2. Positions 73, 76, 89, and 92 each coordinate Zn(2+).

The protein belongs to the HypA/HybF family.

Involved in the maturation of [NiFe] hydrogenases. Required for nickel insertion into the metal center of the hydrogenase. This is Hydrogenase maturation factor HypA from Shewanella oneidensis (strain ATCC 700550 / JCM 31522 / CIP 106686 / LMG 19005 / NCIMB 14063 / MR-1).